We begin with the raw amino-acid sequence, 494 residues long: MIKFALALTLCLAGASLSLAQHNPQWWGNRNTIVHLFEWKWSDIAEECETFLAPRGFAGVQVSPVNENIISSGRPWWERYQPISYKLTTRSGNEEEFADMVRRCNDVGIRIYVDVLLNHMSGDFDGVAVGTAGTEAEPSKKSFPGVPYTAQDFHPSCEITDWNDRFQVQECELVGLKDLNQHSDYVRSKLIEFLDHLIELGVAGFRVDAAKHMASEDLEYIYGSLSNLNIDHGFPHNARPFIFQEVIDHGHETVSREEYNELGAVTEFRFSEEIGKAFRGNNALKWLQSWGTDWGFLKSEQALTFVDNHDNQRDQGAVLNYKSPRQYKMATAFHLAYPYGISRVMSSFAFDDHDTPPPQDAQENIISPEFDEDGVCVNGWICEHRWRQIYAMVGFKNAVRDTELHGWWDNGDNQISFCRGNKGFLAVNNNLYDLSQELNTCLPAGEYCDVTSGSLIDGACTGKSVTVNEHGYGYIHIGSDDFDGVLALHVNAKV.

The signal sequence occupies residues 1 to 20 (MIKFALALTLCLAGASLSLA). The residue at position 21 (Gln-21) is a Pyrrolidone carboxylic acid. Cys-48 and Cys-104 are joined by a disulfide. The Ca(2+) site is built by Asn-118, Gln-169, and Asp-178. A disulfide bridge links Cys-157 with Cys-171. Arg-206 contacts chloride. The active-site Nucleophile is Asp-208. His-212 is a binding site for Ca(2+). The active-site Proton donor is Glu-245. Positions 308 and 343 each coordinate chloride. 3 cysteine pairs are disulfide-bonded: Cys-376-Cys-382, Cys-418-Cys-441, and Cys-448-Cys-460.

This sequence belongs to the glycosyl hydrolase 13 family. In terms of assembly, monomer. The cofactor is Ca(2+). Requires chloride as cofactor.

The protein resides in the secreted. It carries out the reaction Endohydrolysis of (1-&gt;4)-alpha-D-glucosidic linkages in polysaccharides containing three or more (1-&gt;4)-alpha-linked D-glucose units.. This chain is Alpha-amylase-related protein (Amyrel), found in Drosophila serrata (Fruit fly).